We begin with the raw amino-acid sequence, 833 residues long: DNA ligase (833 aa).

NAD(+) is bound by residues 35–39 (DADYD), 84–85 (SL), and glutamate 115. Lysine 117 (N6-AMP-lysine intermediate) is an active-site residue. NAD(+) contacts are provided by arginine 138, glutamate 175, lysine 292, and lysine 316. Zn(2+)-binding residues include cysteine 410, cysteine 413, cysteine 428, and cysteine 434. The BRCT domain occupies 750–833 (EKTGPLDGQT…AFLGDHGQQP (84 aa)).

The protein belongs to the NAD-dependent DNA ligase family. LigA subfamily. It depends on Mg(2+) as a cofactor. Mn(2+) is required as a cofactor.

It catalyses the reaction NAD(+) + (deoxyribonucleotide)n-3'-hydroxyl + 5'-phospho-(deoxyribonucleotide)m = (deoxyribonucleotide)n+m + AMP + beta-nicotinamide D-nucleotide.. DNA ligase that catalyzes the formation of phosphodiester linkages between 5'-phosphoryl and 3'-hydroxyl groups in double-stranded DNA using NAD as a coenzyme and as the energy source for the reaction. It is essential for DNA replication and repair of damaged DNA. In Xanthomonas axonopodis pv. citri (strain 306), this protein is DNA ligase.